A 361-amino-acid polypeptide reads, in one-letter code: tRNA-specific 2-thiouridylase MnmA (361 aa).

ATP is bound by residues 11–18 (GMSGGVDS) and M37. C106 functions as the Nucleophile in the catalytic mechanism. Residues C106 and C202 are joined by a disulfide bond. Residue G130 coordinates ATP. An interaction with tRNA region spans residues 152-154 (KDQ). The Cysteine persulfide intermediate role is filled by C202. The tract at residues 308-309 (RY) is interaction with tRNA.

The protein belongs to the MnmA/TRMU family.

It is found in the cytoplasm. It carries out the reaction S-sulfanyl-L-cysteinyl-[protein] + uridine(34) in tRNA + AH2 + ATP = 2-thiouridine(34) in tRNA + L-cysteinyl-[protein] + A + AMP + diphosphate + H(+). Its function is as follows. Catalyzes the 2-thiolation of uridine at the wobble position (U34) of tRNA, leading to the formation of s(2)U34. The polypeptide is tRNA-specific 2-thiouridylase MnmA (Clostridium botulinum (strain Alaska E43 / Type E3)).